The chain runs to 645 residues: DNA mismatch repair protein MutL (645 aa).

Positions valine 371 to asparagine 403 are disordered. The segment covering histidine 372 to asparagine 387 has biased composition (basic and acidic residues). Residues serine 390–serine 402 are compositionally biased toward low complexity.

This sequence belongs to the DNA mismatch repair MutL/HexB family.

This protein is involved in the repair of mismatches in DNA. It is required for dam-dependent methyl-directed DNA mismatch repair. May act as a 'molecular matchmaker', a protein that promotes the formation of a stable complex between two or more DNA-binding proteins in an ATP-dependent manner without itself being part of a final effector complex. The sequence is that of DNA mismatch repair protein MutL from Staphylococcus epidermidis (strain ATCC 35984 / DSM 28319 / BCRC 17069 / CCUG 31568 / BM 3577 / RP62A).